A 591-amino-acid polypeptide reads, in one-letter code: Aspartate--tRNA(Asp/Asn) ligase (591 aa).

Glutamate 175 contacts L-aspartate. The tract at residues 199 to 202 (QQFK) is aspartate. L-aspartate is bound by residues arginine 221 and histidine 453. 221–223 (RDE) serves as a coordination point for ATP. Glutamate 486 provides a ligand contact to ATP. An L-aspartate-binding site is contributed by arginine 493. 538-541 (GIDR) contacts ATP.

This sequence belongs to the class-II aminoacyl-tRNA synthetase family. Type 1 subfamily. Homodimer.

It localises to the cytoplasm. The catalysed reaction is tRNA(Asx) + L-aspartate + ATP = L-aspartyl-tRNA(Asx) + AMP + diphosphate. Its function is as follows. Aspartyl-tRNA synthetase with relaxed tRNA specificity since it is able to aspartylate not only its cognate tRNA(Asp) but also tRNA(Asn). Reaction proceeds in two steps: L-aspartate is first activated by ATP to form Asp-AMP and then transferred to the acceptor end of tRNA(Asp/Asn). The polypeptide is Aspartate--tRNA(Asp/Asn) ligase (Cereibacter sphaeroides (strain ATCC 17029 / ATH 2.4.9) (Rhodobacter sphaeroides)).